A 338-amino-acid polypeptide reads, in one-letter code: Transcription factor GRA2 (338 aa).

Disordered stretches follow at residues 171–230 (CQDS…PHYA) and 256–277 (TQHE…DGGS). A compositionally biased stretch (polar residues) spans 174–203 (SGVSQPSNLADDTLGQGQPVSTVVQPQHPG). The tract at residues 223-236 (KRQRPHYAIEKRYR) is basic motif. The 81-residue stretch at 223 to 303 (KRQRPHYAIE…NQATLCIRQL (81 aa)) folds into the bHLH domain. Positions 237-303 (AGLQERFEAL…NQATLCIRQL (67 aa)) are helix-loop-helix motif.

Its subcellular location is the nucleus. In terms of biological role, transcription factor that specifically regulates the expression of the gene cluster that mediates the biosynthesis of gramillins A and B, bicyclic lipopeptides that induce cell death in maize leaves but not in wheat leaves. In Gibberella zeae (strain ATCC MYA-4620 / CBS 123657 / FGSC 9075 / NRRL 31084 / PH-1) (Wheat head blight fungus), this protein is Transcription factor GRA2 (GRA2).